The chain runs to 333 residues: Ribosome biogenesis regulatory protein homolog (333 aa).

Disordered regions lie at residues 227 to 248 and 271 to 333; these read KANVKTGKKRKFEANEAPVSGE and AAAV…ARKG. Positions 278 to 295 are enriched in basic and acidic residues; that stretch reads LREKKEKSERKGAKDQTR. Positions 324-333 are enriched in basic residues; that stretch reads GANKAKARKG.

Belongs to the RRS1 family.

It is found in the nucleus. It localises to the nucleolus. Its function is as follows. Involved in ribosomal large subunit assembly. In Caenorhabditis elegans, this protein is Ribosome biogenesis regulatory protein homolog.